Here is a 506-residue protein sequence, read N- to C-terminus: Anaerobic nitric oxide reductase transcription regulator NorR (506 aa).

4-aspartylphosphate is present on Asp57. In terms of domain architecture, Sigma-54 factor interaction spans 187-416 (MIGLSPAMTQ…LEHAIHRAVV (230 aa)). ATP contacts are provided by residues 215–222 (GETGTGKE) and 278–287 (ADNGTLFLDE). Residues 481–500 (WAASARALETDVANLHRLAK) constitute a DNA-binding region (H-T-H motif).

It functions in the pathway nitrogen metabolism; nitric oxide reduction. Its function is as follows. Required for the expression of anaerobic nitric oxide (NO) reductase, acts as a transcriptional activator for at least the norVW operon. Activation also requires sigma-54. In Salmonella dublin (strain CT_02021853), this protein is Anaerobic nitric oxide reductase transcription regulator NorR.